Consider the following 427-residue polypeptide: Trigger factor (427 aa).

Residues 163 to 248 (GDTVILDFEG…LHEIKTKEVP (86 aa)) form the PPIase FKBP-type domain.

This sequence belongs to the FKBP-type PPIase family. Tig subfamily.

It localises to the cytoplasm. It carries out the reaction [protein]-peptidylproline (omega=180) = [protein]-peptidylproline (omega=0). Involved in protein export. Acts as a chaperone by maintaining the newly synthesized protein in an open conformation. Functions as a peptidyl-prolyl cis-trans isomerase. The protein is Trigger factor of Listeria monocytogenes serotype 4b (strain CLIP80459).